The following is a 350-amino-acid chain: 3-dehydroquinate synthase (350 aa).

NAD(+)-binding positions include 106-110 (GVVGD), 130-131 (TS), lysine 143, and lysine 152. Zn(2+) is bound by residues glutamate 185, histidine 246, and histidine 263.

Belongs to the sugar phosphate cyclases superfamily. Dehydroquinate synthase family. Requires NAD(+) as cofactor. It depends on Co(2+) as a cofactor. The cofactor is Zn(2+).

The protein localises to the cytoplasm. It catalyses the reaction 7-phospho-2-dehydro-3-deoxy-D-arabino-heptonate = 3-dehydroquinate + phosphate. It participates in metabolic intermediate biosynthesis; chorismate biosynthesis; chorismate from D-erythrose 4-phosphate and phosphoenolpyruvate: step 2/7. Functionally, catalyzes the conversion of 3-deoxy-D-arabino-heptulosonate 7-phosphate (DAHP) to dehydroquinate (DHQ). The protein is 3-dehydroquinate synthase of Clostridium perfringens (strain 13 / Type A).